The sequence spans 716 residues: Myogenesis-regulating glycosidase (716 aa).

The segment covering 1 to 11 (MSQNLQETSQA) has biased composition (polar residues). The interval 1 to 26 (MSQNLQETSQAYPRHRPGSHAGPKSL) is disordered. Residues 1–55 (MSQNLQETSQAYPRHRPGSHAGPKSLKVTPRATMYTFLPDNFSPAKPKPTKELRP) lie on the Cytoplasmic side of the membrane. The helical; Signal-anchor for type II membrane protein transmembrane segment at 56 to 76 (LLCSAVLGLLLVLAAVVAWCY) threads the bilayer. Residues 77–716 (YSASLRKAER…DEVAYFTWAS (640 aa)) are Extracellular-facing. N-linked (GlcNAc...) asparagine glycans are attached at residues asparagine 239, asparagine 249, and asparagine 455. Catalysis depends on residues aspartate 462 and glutamate 465. The active-site Proton donor is the aspartate 527.

It belongs to the glycosyl hydrolase 31 family. Interacts with IGF2; this interaction is required for IGF2 secretion. Expressed in brain, liver, spleen, skeletal muscle, heart, lung and kidney. High expression is observed in the cerebellum, specifically in astrocytes. Highly expressed in skeletal muscle (at protein level).

It localises to the nucleus membrane. The protein resides in the endoplasmic reticulum membrane. Putative glycosidase. Promotes myogenesis by activating AKT signaling through the maturation and secretion of IGF2. The sequence is that of Myogenesis-regulating glycosidase (Myorg) from Mus musculus (Mouse).